Consider the following 88-residue polypeptide: Small cysteine-rich outer membrane protein OmcA (88 aa).

An N-terminal signal peptide occupies residues 1–18 (MKKTALLAALCSVVSLSS). Residue Cys-19 is the site of N-palmitoyl cysteine attachment. Residue Cys-19 is the site of S-diacylglycerol cysteine attachment.

Part of a disulfide cross-linked outer membrane complex (COMC) composed of the major outer membrane porin (MOMP), the small cysteine-rich protein (OmcA) and the large cysteine-rich periplasmic protein (OmcB).

Its subcellular location is the cell outer membrane. In terms of biological role, in elementary bodies (EBs, the infectious stage, which is able to survive outside the host cell) provides the structural integrity of the outer envelope through disulfide cross-links with the large cysteine-rich periplasmic protein and the major outer membrane porin. It has been described in publications as the Sarkosyl-insoluble COMC (Chlamydia outer membrane complex), and serves as the functional equivalent of peptidoglycan. In Chlamydia muridarum (strain MoPn / Nigg), this protein is Small cysteine-rich outer membrane protein OmcA (omcA).